Consider the following 1036-residue polypeptide: Multiple C2 domain and transmembrane region protein 2 (1036 aa).

One can recognise a C2 1 domain in the interval 1-110 (MRNTTKLVVH…YKDDQVYQRF (110 aa)). Disordered stretches follow at residues 137-204 (DQTF…PVQK) and 225-246 (RENP…HPQN). The segment covering 146 to 155 (PYTSPTQASA) has biased composition (polar residues). Over residues 158 to 168 (TEEDTADSETE) the composition is skewed to acidic residues. Residues 190-204 (VEGKKSEEVKEPVQK) show a composition bias toward basic and acidic residues. C2 domains lie at 277–399 (PNAG…PQWY), 440–563 (VHGE…SRWF), and 607–734 (YISD…THSF). Positions 316, 364, 366, and 372 each coordinate Ca(2+). 2 consecutive transmembrane segments (helical) span residues 871–891 (FILV…MFFI) and 979–999 (LFIL…FKAI).

The protein belongs to the MCTP family. Requires Ca(2+) as cofactor. In terms of tissue distribution, expressed in the vascular tissues of roots and rosette leaves. Accumulates in roots meristems. Observed in flowers.

It is found in the cell membrane. Its function is as follows. May function as a signaling molecule by regulating the trafficking of other regulators. The protein is Multiple C2 domain and transmembrane region protein 2 of Arabidopsis thaliana (Mouse-ear cress).